Reading from the N-terminus, the 284-residue chain is GTP cyclohydrolase MptA (284 aa).

Belongs to the GTP cyclohydrolase IV family. As to quaternary structure, homodimer. Fe(2+) is required as a cofactor.

The enzyme catalyses GTP + H2O = 7,8-dihydroneopterin 2',3'-cyclic phosphate + formate + diphosphate + H(+). Its pathway is cofactor biosynthesis; 5,6,7,8-tetrahydromethanopterin biosynthesis. In terms of biological role, converts GTP to 7,8-dihydro-D-neopterin 2',3'-cyclic phosphate, the first intermediate in the biosynthesis of coenzyme methanopterin. The polypeptide is GTP cyclohydrolase MptA (Thermoplasma volcanium (strain ATCC 51530 / DSM 4299 / JCM 9571 / NBRC 15438 / GSS1)).